A 456-amino-acid polypeptide reads, in one-letter code: ATP synthase subunit beta (456 aa).

Residue 135 to 142 coordinates ATP; that stretch reads GGAGVGKT.

This sequence belongs to the ATPase alpha/beta chains family. F-type ATPases have 2 components, CF(1) - the catalytic core - and CF(0) - the membrane proton channel. CF(1) has five subunits: alpha(3), beta(3), gamma(1), delta(1), epsilon(1). CF(0) has four main subunits: a(1), b(1), b'(1) and c(9-12).

The protein resides in the cellular thylakoid membrane. It catalyses the reaction ATP + H2O + 4 H(+)(in) = ADP + phosphate + 5 H(+)(out). Produces ATP from ADP in the presence of a proton gradient across the membrane. The catalytic sites are hosted primarily by the beta subunits. The sequence is that of ATP synthase subunit beta (atpD) from Acaryochloris marina (strain MBIC 11017).